A 305-amino-acid polypeptide reads, in one-letter code: MHTDLGPDQKAEVLIEALPWLEEFFGKTIVIKYGGNAMVNDHLKECFAEDMVFLRQVGIHPVVVHGGGPQISQMLKALGIHSEFKGGLRVTTPEAMDVVRMVLTGKVSRELVGLINAHGPLAVGLSGEDAALFSASQRKPIIDGEPTDIGLVGDVVGVDASAVVDLIHAGRIPVVSSVAPNEDDATEVLNVNADSAAAALASALGAHKLVILTDVDGLYADWPDKNSLVGRIGVEDLRDLLPELESGMRPKMEACVRAIDGGVQQAHIIDGRKPHSILNEIFTTAGVGTMVEPGEGMELRSSYDL.

Substrate is bound by residues 67 to 68, arginine 89, and asparagine 190; that span reads GG.

The protein belongs to the acetylglutamate kinase family. ArgB subfamily.

It localises to the cytoplasm. The catalysed reaction is N-acetyl-L-glutamate + ATP = N-acetyl-L-glutamyl 5-phosphate + ADP. It participates in amino-acid biosynthesis; L-arginine biosynthesis; N(2)-acetyl-L-ornithine from L-glutamate: step 2/4. In terms of biological role, catalyzes the ATP-dependent phosphorylation of N-acetyl-L-glutamate. This Bifidobacterium animalis subsp. lactis (strain AD011) protein is Acetylglutamate kinase.